We begin with the raw amino-acid sequence, 542 residues long: Chaperonin GroEL 2 (542 aa).

ATP-binding positions include 29–32, 86–90, G413, 477–479, and D493; these read TLGP, DGTTT, and NAA.

It belongs to the chaperonin (HSP60) family. In terms of assembly, forms a cylinder of 14 subunits composed of two heptameric rings stacked back-to-back. Interacts with the co-chaperonin GroES.

It localises to the cytoplasm. It carries out the reaction ATP + H2O + a folded polypeptide = ADP + phosphate + an unfolded polypeptide.. Functionally, together with its co-chaperonin GroES, plays an essential role in assisting protein folding. The GroEL-GroES system forms a nano-cage that allows encapsulation of the non-native substrate proteins and provides a physical environment optimized to promote and accelerate protein folding. This Kineococcus radiotolerans (strain ATCC BAA-149 / DSM 14245 / SRS30216) protein is Chaperonin GroEL 2.